We begin with the raw amino-acid sequence, 297 residues long: NAC domain-containing protein 72 (297 aa).

The 149-residue stretch at 14 to 162 (LPPGFRFYPT…DWVLCRIYKK (149 aa)) folds into the NAC domain. The DNA-binding element occupies 111–168 (VGIKKALVFYAGKAPKGTKTNWIMHEYRLIEHSRSHGSSKLDDWVLCRIYKKTSGSQR). 2 disordered regions span residues 168–195 (RQAVTPVQACREEHSTNGSSSSSSSQLD) and 259–278 (GEAESGHVNRQQNSSGLTQS). Over residues 266-277 (VNRQQNSSGLTQ) the composition is skewed to polar residues.

In terms of tissue distribution, expressed in leaves and in root pericycle and epidermis.

It is found in the nucleus. Functionally, transcription factors that bind specifically to the 5'-CATGTG-3' motif and with bipartite regions with 5'-CGTr-3' and 5'-YACG-3' as cores. Involved in the regulation of metabolic reprogramming during senescence by promoting the chloroplast protein degradation and the catabolism of lysine, phytol and free fatty acids via the induction of CV, LKR/SDH and PES1 expression. Also triggers the degradation of starch and the accumulation of mono- and disaccharides during senescence by enhancing the expression of AMY1, SFP1 and SWEET15. In Arabidopsis thaliana (Mouse-ear cress), this protein is NAC domain-containing protein 72.